Here is a 473-residue protein sequence, read N- to C-terminus: Spliceosome-associated protein CWC27 homolog (473 aa).

The residue at position 2 (serine 2) is an N-acetylserine. A PPIase cyclophilin-type domain is found at threonine 11 to valine 166. Over residues arginine 177–lysine 193 the composition is skewed to basic and acidic residues. Disordered regions lie at residues arginine 177 to threonine 386 and glutamine 399 to arginine 473. Positions serine 206–lysine 230 form a coiled coil. A compositionally biased stretch (basic and acidic residues) spans serine 231–histidine 241. Positions glycine 257–aspartate 275 are enriched in acidic residues. Composition is skewed to basic and acidic residues over residues glycine 276–alanine 287, glutamate 305–glutamate 348, and glutamate 360–arginine 372. Residues glutamate 307–lysine 378 adopt a coiled-coil conformation. Phosphoserine is present on serine 347. The segment covering proline 405–glycine 419 has biased composition (acidic residues). Basic and acidic residues-rich tracts occupy residues glutamine 426 to serine 438 and arginine 458 to arginine 473.

This sequence belongs to the cyclophilin-type PPIase family. As to quaternary structure, part of the activated spliceosome B/catalytic step 1 spliceosome, one of the forms of the spliceosome which has a well-formed active site but still cannot catalyze the branching reaction and is composed at least of 52 proteins, the U2, U5 and U6 snRNAs and the pre-mRNA. Recruited during early steps of activated spliceosome B maturation, it is probably one of the first proteins released from this complex as he matures to the spliceosome C complex. Component of the minor spliceosome, which splices U12-type introns.

The protein localises to the nucleus. As part of the spliceosome, plays a role in pre-mRNA splicing. Probable inactive PPIase with no peptidyl-prolyl cis-trans isomerase activity. As a component of the minor spliceosome, involved in the splicing of U12-type introns in pre-mRNAs. This is Spliceosome-associated protein CWC27 homolog from Macaca fascicularis (Crab-eating macaque).